Here is a 250-residue protein sequence, read N- to C-terminus: Ribosomal RNA small subunit methyltransferase J (250 aa).

S-adenosyl-L-methionine-binding positions include arginine 96 to aspartate 97 and aspartate 168.

It belongs to the methyltransferase superfamily. RsmJ family.

It is found in the cytoplasm. It catalyses the reaction guanosine(1516) in 16S rRNA + S-adenosyl-L-methionine = N(2)-methylguanosine(1516) in 16S rRNA + S-adenosyl-L-homocysteine + H(+). Its function is as follows. Specifically methylates the guanosine in position 1516 of 16S rRNA. The sequence is that of Ribosomal RNA small subunit methyltransferase J from Neisseria gonorrhoeae (strain NCCP11945).